The sequence spans 616 residues: Probable beta-hexosaminidase ARB_01353 (616 aa).

A signal peptide spans 1-20; sequence MRFAKALAITAVLLSGVVEA. The tract at residues 96–117 is disordered; it reads KFDPFPDQSSKPKEKRQNAPPG. N-linked (GlcNAc...) asparagine glycosylation is present at Asn333. The active-site Proton donor is the Glu361.

It belongs to the glycosyl hydrolase 20 family.

Its subcellular location is the secreted. The catalysed reaction is Hydrolysis of terminal non-reducing N-acetyl-D-hexosamine residues in N-acetyl-beta-D-hexosaminides.. In terms of biological role, beta-hexosaminidase that shows a broad substrate specificity. This is Probable beta-hexosaminidase ARB_01353 from Arthroderma benhamiae (strain ATCC MYA-4681 / CBS 112371) (Trichophyton mentagrophytes).